A 62-amino-acid chain; its full sequence is Large ribosomal subunit protein eL24 (62 aa).

Zn(2+) is bound by residues Cys-7, Cys-10, Cys-33, and Cys-37. The C4-type zinc finger occupies Cys-7–Cys-37.

Belongs to the eukaryotic ribosomal protein eL24 family. In terms of assembly, part of the 50S ribosomal subunit. Forms a cluster with proteins L3 and L14. Zn(2+) serves as cofactor.

In terms of biological role, binds to the 23S rRNA. The sequence is that of Large ribosomal subunit protein eL24 from Staphylothermus marinus (strain ATCC 43588 / DSM 3639 / JCM 9404 / F1).